The chain runs to 90 residues: Cell division protein CrgA (90 aa).

Positions 1–25 (MPKARVTKNETAPVSSNPSANRTPV) are disordered. Residues 9 to 22 (NETAPVSSNPSANR) show a composition bias toward polar residues. Helical transmembrane passes span 38 to 58 (VIMFAFMIVGLAWLIINYLVG) and 67 to 87 (LGAWNYGIGFGLMIIGLLMTM).

The protein belongs to the CrgA family.

The protein localises to the cell membrane. Involved in cell division. This is Cell division protein CrgA from Corynebacterium glutamicum (strain ATCC 13032 / DSM 20300 / JCM 1318 / BCRC 11384 / CCUG 27702 / LMG 3730 / NBRC 12168 / NCIMB 10025 / NRRL B-2784 / 534).